A 616-amino-acid chain; its full sequence is Zinc metalloproteinase nas-36 (616 aa).

A signal peptide spans 1 to 21 (MRRFCRLLFLNSLLSISICKA). A propeptide spanning residues 22–125 (QNPAHLVADE…SKDKTKRLRR (104 aa)) is cleaved from the precursor. The Peptidase M12A domain occupies 126–321 (SFVSDKTATW…VATINTAYCK (196 aa)). Disulfide bonds link Cys-168–Cys-320, Cys-191–Cys-210, Cys-324–Cys-345, Cys-347–Cys-356, Cys-367–Cys-396, Cys-424–Cys-444, Cys-518–Cys-549, Cys-522–Cys-554, and Cys-534–Cys-539. An N-linked (GlcNAc...) asparagine glycan is attached at Asn-173. His-218 serves as a coordination point for Zn(2+). Residue Glu-219 is part of the active site. Residues His-222 and His-228 each contribute to the Zn(2+) site. The region spanning 316–357 (NTAYCKEECKSEKTECEYGGYMRPSKCSECLCPDGLGGEKCE) is the EGF-like domain. Residues 367–481 (CGGILELSDE…IGFKIQVRST (115 aa)) form the CUB domain. The TSP type-1 domain maps to 506-555 (PNVWADWGEWSMCSRTCGGCGIRSRVRSCRSKKCEGRRQEFGTCNLKACP).

Zn(2+) serves as cofactor.

It is found in the secreted. Functionally, mtalloprotease. Involved in molting, a process during larval stages in which a new cuticle is formed and the old cuticle is shed. This is Zinc metalloproteinase nas-36 from Caenorhabditis briggsae.